Reading from the N-terminus, the 150-residue chain is 16 kDa phloem protein 1 (150 aa).

The region spanning 1–108 is the C2 domain; it reads MGMGMMEVHL…LAEGVRKGKS (108 aa). Ca(2+) contacts are provided by Asp20, Asp27, Asp78, Asp80, and Asp86.

Requires Ca(2+) as cofactor. Sieve elements of leaves, stems, roots and flowers.

Binds to both sense and antisense RNA. Interacts with mesophyll plasmodesmata to mediate its own cell-to-cell transport and potentiate RNA trafficking. The protein is 16 kDa phloem protein 1 (PP16-1) of Cucurbita maxima (Pumpkin).